The sequence spans 628 residues: Beta-lactamase-like protein 1 (628 aa).

The signal sequence occupies residues 1–28 (MKNILSFSFSFSFLYILFLLLFLNNNLL). 4 N-linked (GlcNAc...) asparagine glycosylation sites follow: Asn45, Asn68, Asn198, and Asn241. Residues 245–281 (NNNNNNNNNNNNNNNNNNNNNNNNNNNNNNNNNNNNN) are compositionally biased toward low complexity. The disordered stretch occupies residues 245-285 (NNNNNNNNNNNNNNNNNNNNNNNNNNNNNNNNNNNNNKIKT). N-linked (GlcNAc...) asparagine glycans are attached at residues Asn313 and Asn335. The segment at 494 to 516 (EKEEKEEEEENQQDESQQQQQQQ) is disordered. Over residues 496–506 (EEKEEEEENQQ) the composition is skewed to acidic residues. The segment covering 507–516 (DESQQQQQQQ) has biased composition (low complexity).

It belongs to the beta-lactamase family.

The protein resides in the secreted. This is Beta-lactamase-like protein 1 from Dictyostelium discoideum (Social amoeba).